A 181-amino-acid polypeptide reads, in one-letter code: Peptide methionine sulfoxide reductase MsrA (181 aa).

C14 is an active-site residue.

Belongs to the MsrA Met sulfoxide reductase family.

It carries out the reaction L-methionyl-[protein] + [thioredoxin]-disulfide + H2O = L-methionyl-(S)-S-oxide-[protein] + [thioredoxin]-dithiol. It catalyses the reaction [thioredoxin]-disulfide + L-methionine + H2O = L-methionine (S)-S-oxide + [thioredoxin]-dithiol. Has an important function as a repair enzyme for proteins that have been inactivated by oxidation. Catalyzes the reversible oxidation-reduction of methionine sulfoxide in proteins to methionine. The polypeptide is Peptide methionine sulfoxide reductase MsrA (Bacillus licheniformis (strain ATCC 14580 / DSM 13 / JCM 2505 / CCUG 7422 / NBRC 12200 / NCIMB 9375 / NCTC 10341 / NRRL NRS-1264 / Gibson 46)).